Here is a 752-residue protein sequence, read N- to C-terminus: MAP/microtubule affinity-regulating kinase 4 (752 aa).

Residues 1–36 (MSSRTVLAPGNDRNSDTHGTLGSGRSSDKGPSWSSR) are disordered. One can recognise a Protein kinase domain in the interval 59–310 (YRLLRTIGKG…LEQIMKDKWI (252 aa)). ATP is bound by residues 65 to 73 (IGKGNFAKV) and Lys88. The active-site Proton acceptor is the Asp181. Residue Thr214 is modified to Phosphothreonine; by LKB1. The 45-residue stretch at 324–368 (EPEEDFGDTKRIEVMVGMGYTREEIKESLTSQKYNEVTATYLLLG) folds into the UBA domain. The interval 385–614 (ARVRAPSDTT…PAGRPRPTTN (230 aa)) is disordered. Residues 391-406 (SDTTNGTSSSKGTSHS) show a composition bias toward low complexity. A phosphoserine mark is found at Ser423 and Ser543. Residues 544–553 (PSSHSLAPPS) show a composition bias toward low complexity. A KA1 domain is found at 703–752 (AGGPEPLSHFEVEVCQLPRPGLRGVLFRRVAGTALAFRTLVTRISNDLEL).

This sequence belongs to the protein kinase superfamily. CAMK Ser/Thr protein kinase family. SNF1 subfamily. Interacts with MAPT/TAU. Interacts with gamma-tubulin. Interacts with ODF2. Interacts with USP9X. Interacts with YWHAQ. Interacts with NLRP3; promoting NLRP3 recruitment to microtubule organizing center (MTOC). Mg(2+) serves as cofactor. In terms of processing, ubiquitinated with 'Lys-29'- and 'Lys-33'-linked polyubiquitins which appear to impede LKB1-mediated phosphorylation. Deubiquitinated by USP9X. Phosphorylated at Thr-214 by STK11/LKB1 in complex with STE20-related adapter-alpha (STRADA) pseudo kinase and CAB39. Phosphorylated throughout the cell cycle. Ubiquitous. Isoform 2 is brain-specific. Expressed at highest levels in brain and testis. Also expressed in heart, lung, liver, muscle, kidney and spleen.

The protein localises to the cytoplasm. It is found in the cytoskeleton. The protein resides in the microtubule organizing center. It localises to the centrosome. Its subcellular location is the cilium basal body. The protein localises to the cilium axoneme. It is found in the cell projection. The protein resides in the dendrite. The enzyme catalyses L-seryl-[protein] + ATP = O-phospho-L-seryl-[protein] + ADP + H(+). It carries out the reaction L-threonyl-[protein] + ATP = O-phospho-L-threonyl-[protein] + ADP + H(+). With respect to regulation, activated by phosphorylation on Thr-214. In terms of biological role, serine/threonine-protein kinase. Phosphorylates the microtubule-associated protein MAPT/TAU. Also phosphorylates the microtubule-associated proteins MAP2 and MAP4. Involved in regulation of the microtubule network, causing reorganization of microtubules into bundles. Required for the initiation of axoneme extension during cilium assembly. Regulates the centrosomal location of ODF2 and phosphorylates ODF2 in vitro. Plays a role in cell cycle progression, specifically in the G1/S checkpoint. Reduces neuronal cell survival. Plays a role in energy homeostasis by regulating satiety and metabolic rate. Promotes adipogenesis by activating JNK1 and inhibiting the p38MAPK pathway, and triggers apoptosis by activating the JNK1 pathway. Phosphorylates mTORC1 complex member RPTOR and acts as a negative regulator of the mTORC1 complex, probably due to disruption of the interaction between phosphorylated RPTOR and the RRAGA/RRAGC heterodimer which is required for mTORC1 activation. Involved in NLRP3 positioning along microtubules by mediating NLRP3 recruitment to microtubule organizing center (MTOC) upon inflammasome activation. This is MAP/microtubule affinity-regulating kinase 4 from Homo sapiens (Human).